The chain runs to 158 residues: Endoribonuclease YbeY (158 aa).

Zn(2+) is bound by residues His121, His125, and His131.

It belongs to the endoribonuclease YbeY family. Zn(2+) is required as a cofactor.

Its subcellular location is the cytoplasm. Its function is as follows. Single strand-specific metallo-endoribonuclease involved in late-stage 70S ribosome quality control and in maturation of the 3' terminus of the 16S rRNA. In Exiguobacterium sp. (strain ATCC BAA-1283 / AT1b), this protein is Endoribonuclease YbeY.